Reading from the N-terminus, the 113-residue chain is Urotensin-2B (113 aa).

An N-terminal signal peptide occupies residues 1–27 (MKVFSTSLWCGLLTLLSVMNLFKSVRG). Residues 28 to 103 (RPHLSSGHEL…LDNLSSSHTK (76 aa)) constitute a propeptide that is removed on maturation. A disulfide bond links C107 and C112.

The protein belongs to the urotensin-2 family.

Its subcellular location is the secreted. Functionally, potent vasoconstrictor. The sequence is that of Urotensin-2B (Uts2b) from Mus musculus (Mouse).